Here is a 266-residue protein sequence, read N- to C-terminus: Putative carbamate hydrolase RutD (266 aa).

Belongs to the AB hydrolase superfamily. Hydrolase RutD family.

The catalysed reaction is carbamate + 2 H(+) = NH4(+) + CO2. Functionally, involved in pyrimidine catabolism. May facilitate the hydrolysis of carbamate, a reaction that can also occur spontaneously. This is Putative carbamate hydrolase RutD from Escherichia coli O139:H28 (strain E24377A / ETEC).